The sequence spans 212 residues: Imidazole glycerol phosphate synthase subunit HisH (212 aa).

The 209-residue stretch at 3–211 folds into the Glutamine amidotransferase type-1 domain; that stretch reads LIAVIDYDMG…VQQVQKLALV (209 aa). Residue Cys-81 is the Nucleophile of the active site. Residues His-186 and Glu-188 contribute to the active site.

In terms of assembly, heterodimer of HisH and HisF.

The protein resides in the cytoplasm. It carries out the reaction 5-[(5-phospho-1-deoxy-D-ribulos-1-ylimino)methylamino]-1-(5-phospho-beta-D-ribosyl)imidazole-4-carboxamide + L-glutamine = D-erythro-1-(imidazol-4-yl)glycerol 3-phosphate + 5-amino-1-(5-phospho-beta-D-ribosyl)imidazole-4-carboxamide + L-glutamate + H(+). The catalysed reaction is L-glutamine + H2O = L-glutamate + NH4(+). It functions in the pathway amino-acid biosynthesis; L-histidine biosynthesis; L-histidine from 5-phospho-alpha-D-ribose 1-diphosphate: step 5/9. Its function is as follows. IGPS catalyzes the conversion of PRFAR and glutamine to IGP, AICAR and glutamate. The HisH subunit catalyzes the hydrolysis of glutamine to glutamate and ammonia as part of the synthesis of IGP and AICAR. The resulting ammonia molecule is channeled to the active site of HisF. The polypeptide is Imidazole glycerol phosphate synthase subunit HisH (Microcystis aeruginosa (strain NIES-843 / IAM M-2473)).